The sequence spans 761 residues: 1,4-alpha-glucan branching enzyme GlgB (761 aa).

Asp431 (nucleophile) is an active-site residue. Glu484 functions as the Proton donor in the catalytic mechanism.

Belongs to the glycosyl hydrolase 13 family. GlgB subfamily. In terms of assembly, monomer.

The catalysed reaction is Transfers a segment of a (1-&gt;4)-alpha-D-glucan chain to a primary hydroxy group in a similar glucan chain.. Its pathway is glycan biosynthesis; glycogen biosynthesis. Its function is as follows. Catalyzes the formation of the alpha-1,6-glucosidic linkages in glycogen by scission of a 1,4-alpha-linked oligosaccharide from growing alpha-1,4-glucan chains and the subsequent attachment of the oligosaccharide to the alpha-1,6 position. The sequence is that of 1,4-alpha-glucan branching enzyme GlgB from Synechococcus sp. (strain WH7803).